The chain runs to 2253 residues: Polycystin family receptor for egg jelly (2253 aa).

Positions 1–19 are cleaved as a signal peptide; it reads MRPGPALLLLGVGLSLSVG. Over 20 to 1184 the chain is Extracellular; it reads RLPLPPVPRG…NIIKSLHQNP (1165 aa). The segment covering 154–169 has biased composition (low complexity); sequence RPASPAARVSPRSAAP. Positions 154–177 are disordered; that stretch reads RPASPAARVSPRSAAPGPRPQQGF. Residues Asn-197, Asn-242, Asn-295, Asn-306, Asn-345, Asn-349, Asn-481, Asn-674, Asn-849, Asn-890, Asn-923, Asn-939, Asn-958, and Asn-965 are each glycosylated (N-linked (GlcNAc...) asparagine). Residues 215–913 enclose the REJ domain; that stretch reads CVIQRVRINT…STMFCDFTND (699 aa). The chain crosses the membrane as a helical span at residues 1185–1205; it reads VTLFTVLFIILLYVGLAFWAL. Over 1206-1389 the chain is Cytoplasmic; that stretch reads YRDEMDQHLR…VAKTFNRLQR (184 aa). The PLAT domain occupies 1230-1347; it reads LCYLVTIFTG…TLDRTFHVTH (118 aa). A helical membrane pass occupies residues 1390-1410; that stretch reads LSCCLAMLLSSLLCNIMFFNL. The Extracellular portion of the chain corresponds to 1411–1427; that stretch reads NRQEQTESRERKYMRSM. Residues 1428–1448 traverse the membrane as a helical segment; the sequence is MIGIESVLITIPVQLLITFLF. The Cytoplasmic segment spans residues 1449–1576; that stretch reads TCSQRKPQAD…KPRIVLPWWC (128 aa). A disordered region spans residues 1494–1562; sequence PREVAKPASK…EQHPSQKDLQ (69 aa). The span at 1517–1527 shows a compositional bias: basic residues; that stretch reads SKPKHRHRKAQ. Basic and acidic residues predominate over residues 1549–1558; the sequence is DVHSEQHPSQ. Residues 1577–1597 traverse the membrane as a helical segment; that stretch reads VYVAWFLVFATSSISSFFIVF. At 1598–1607 the chain is on the extracellular side; the sequence is YGLTYGYDKS. The helical transmembrane segment at 1608-1628 threads the bilayer; the sequence is IEWLFASFCSFCQSVLLVQPS. Residues 1629–1708 lie on the Cytoplasmic side of the membrane; it reads KIILLSGFRT…RKKRIKRRAL (80 aa). A helical membrane pass occupies residues 1709-1729; that stretch reads LFLSYILTHFIFLALLLILIV. The Extracellular segment spans residues 1730-1966; sequence LLRHTDCFYY…FDRKASAEIY (237 aa). Asn-1836, Asn-1893, and Asn-1944 each carry an N-linked (GlcNAc...) asparagine glycan. Residues 1967-1987 traverse the membrane as a helical segment; sequence LYVAILIFFLAYVVDEGCIIM. At 1988 to 1996 the chain is on the cytoplasmic side; it reads QERASYVRS. The helical transmembrane segment at 1997–2017 threads the bilayer; that stretch reads VYNLLNFALKCIFTVLIVLFL. Topologically, residues 2018 to 2042 are extracellular; it reads RKHFLATGIIRFYLSNPEDFIPFHA. Residues 2043 to 2063 traverse the membrane as a helical segment; that stretch reads VSQVDHIMRIILGFLLFLTIL. Residues 2064–2091 lie on the Cytoplasmic side of the membrane; sequence KTLRYSRFFYDVRLAQRAIQAALPGICH. Residues 2092–2112 traverse the membrane as a helical segment; that stretch reads MAFVVSVYFFVYMAFGYLVFG. Residues 2113 to 2145 lie on the Extracellular side of the membrane; sequence QHEWNYSNLIHSTQTVFSYCVSAFQNTEFSNNR. A helical membrane pass occupies residues 2146-2166; it reads ILGVLFLSSFMLVMICVLINL. At 2167 to 2253 the chain is on the cytoplasmic side; sequence FQAVILSAYE…NGKKMVYLVV (87 aa).

Belongs to the polycystin family. As to expression, exclusively expressed in testis.

It localises to the cell membrane. The protein resides in the cytoplasmic vesicle. It is found in the secretory vesicle. The protein localises to the acrosome membrane. Its subcellular location is the nucleus. In terms of biological role, testis-specific protein that controls sperm transport and the timing of zona pellucida-evoked exocytosis of the sperm acrosome. The sequence is that of Polycystin family receptor for egg jelly from Homo sapiens (Human).